Here is a 91-residue protein sequence, read N- to C-terminus: Acylphosphatase (91 aa).

The Acylphosphatase-like domain maps to cysteine 5–arginine 91. Residues arginine 20 and asparagine 38 contribute to the active site.

It belongs to the acylphosphatase family.

It carries out the reaction an acyl phosphate + H2O = a carboxylate + phosphate + H(+). The protein is Acylphosphatase (acyP) of Pseudomonas aeruginosa (strain ATCC 15692 / DSM 22644 / CIP 104116 / JCM 14847 / LMG 12228 / 1C / PRS 101 / PAO1).